Consider the following 432-residue polypeptide: Transcriptional adapter 3 (432 aa).

Residue Lys-21 forms a Glycyl lysine isopeptide (Lys-Gly) (interchain with G-Cter in SUMO2) linkage. The stretch at 40–69 (IEELDTLQLELETLLSSASRRLRVLEAETQ) forms a coiled coil. The interval 87 to 127 (ARDHELGAPPKHGKPKKQKLEGKTGHGPGPGPGRPKSKNVQ) is disordered. A Glycyl lysine isopeptide (Lys-Gly) (interchain with G-Cter in SUMO2) cross-link involves residue Lys-129. Residues 272–319 (NIISPMEDSPIPDMSGKESGADGASTSPRNQNKPFSVPHTKSLESRIK) are disordered. Phosphoserine occurs at positions 280 and 298. Polar residues predominate over residues 295 to 305 (ASTSPRNQNKP). A coiled-coil region spans residues 367 to 407 (LLRLAKEEVSRQELRQRVRMADNEVMDAFRKIMAARQKKRT). Lys-418 bears the N6-acetyllysine mark.

This sequence belongs to the NGG1 family. In terms of assembly, the PCAF complex is composed of a number of TBP-associated factors (TAFS), such as TAF5, TAF5L, TAF6, TAF6L, TAF9, TAF10 and TAF12, PCAF, and also PCAF-associated factors (PAFs), such as TADA2L/ADA2, TADA3L/ADA3 and SPT3. Interacts directly with TADA2L and PCAF and also with the high-risk HPV oncoprotein E6. Component of the STAGA transcription coactivator-HAT complex, at least composed of SUPT3H, GCN5L2, TAF5L, TAF6L, SUPT7L, TADA3L, TAD1L, TAF10, TAF12, TRRAP and TAF9. Component of the TFTC-HAT complex. Component of the ADA2A-containing complex (ATAC), composed of KAT14, KAT2A, TADA2L, TADA3L, ZZ3, MBIP, WDR5, YEATS2, CCDC101 and DR1.

It localises to the nucleus. Functionally, functions as a component of the PCAF complex. The PCAF complex is capable of efficiently acetylating histones in a nucleosomal context. The PCAF complex could be considered as the human version of the yeast SAGA complex. Also known as a coactivator for p53/TP53-dependent transcriptional activation. Component of the ATAC complex, a complex with histone acetyltransferase activity on histones H3 and H4. The polypeptide is Transcriptional adapter 3 (Tada3) (Rattus norvegicus (Rat)).